A 776-amino-acid polypeptide reads, in one-letter code: Serine/threonine-protein kinase SIK1 (776 aa).

The region spanning 27-278 (YDVERTLGKG…IAQIRQHRWM (252 aa)) is the Protein kinase domain. Residues 33-41 (LGKGNFAVV) and lysine 56 each bind ATP. Aspartate 149 acts as the Proton acceptor in catalysis. Threonine 182 carries the phosphothreonine; by LKB1 and GSK3-beta modification. Serine 186 carries the post-translational modification Phosphoserine; by autocatalysis. One can recognise a UBA domain in the interval 303 to 343 (DYNEQVLGIMQALGIDRQRTVESLQNSSYNHFAAIYYLLLE). Position 322 is a phosphothreonine; by CaMK1 (threonine 322). 2 disordered regions span residues 350–371 (STQPSSRATPAPARQPQLRNSD) and 449–472 (EARQGPSLEEEQEVQEPLPGSTGR). Serine 577 is modified (phosphoserine; by PKA). The interval 586-612 (KAFRQQLRKNARTKGFLGLNKIKGLAR) is RK-rich region. The interval 621–643 (GSRGGMSTFHTPAPSSGLQGCTA) is disordered. Residues 628 to 643 (TFHTPAPSSGLQGCTA) are compositionally biased toward polar residues.

It belongs to the protein kinase superfamily. CAMK Ser/Thr protein kinase family. AMPK subfamily. In terms of assembly, interacts (when phosphorylated on Thr-182 and Ser-186) with YWHAZ. Interacts with ATP1A1. Mg(2+) serves as cofactor. Post-translationally, phosphorylated at Thr-182 by STK11/LKB1 in complex with STE20-related adapter-alpha (STRADA) pseudo kinase and CAB39, leading to its activation. Phosphorylation at Thr-182 promotes autophosphorylation at Ser-186, which is required for sustained activity. Autophosphorylation at Ser-186 is maintained by sequential phosphorylation at Thr-182 by GSK3-beta. GSK3-beta cannot initiate phosphorylation at Thr-182, it can only maintain it. Phosphorylation at Ser-577 by PKA promotes translocation to the cytoplasm. Phosphorylation at Thr-322 by CaMK1 following intracellular sodium concentration leads to activation.

Its subcellular location is the cytoplasm. The protein resides in the nucleus. The catalysed reaction is L-seryl-[protein] + ATP = O-phospho-L-seryl-[protein] + ADP + H(+). It catalyses the reaction L-threonyl-[protein] + ATP = O-phospho-L-threonyl-[protein] + ADP + H(+). Its activity is regulated as follows. Activated by phosphorylation on Thr-182. Also activated by phosphorylation on Thr-322 in response to increases in intracellular sodium in parallel with elevations in intracellular calcium through the reversible sodium/calcium exchanger. Serine/threonine-protein kinase involved in various processes such as cell cycle regulation, gluconeogenesis and lipogenesis regulation, muscle growth and differentiation and tumor suppression. Phosphorylates HDAC4, HDAC5, PPME1, SREBF1, CRTC1/TORC1 and CRTC2/TORC2. Acts as a tumor suppressor and plays a key role in p53/TP53-dependent anoikis, a type of apoptosis triggered by cell detachment: required for phosphorylation of p53/TP53 in response to loss of adhesion and is able to suppress metastasis. Part of a sodium-sensing signaling network, probably by mediating phosphorylation of PPME1: following increases in intracellular sodium, SIK1 is activated by CaMK1 and phosphorylates PPME1 subunit of protein phosphatase 2A (PP2A), leading to dephosphorylation of sodium/potassium-transporting ATPase ATP1A1 and subsequent increase activity of ATP1A1. Acts as a regulator of muscle cells by phosphorylating and inhibiting class II histone deacetylases HDAC4 and HDAC5, leading to promote expression of MEF2 target genes in myocytes. Also required during cardiomyogenesis by regulating the exit of cardiomyoblasts from the cell cycle via down-regulation of CDKN1C/p57Kip2. Acts as a regulator of hepatic gluconeogenesis by phosphorylating and repressing the CREB-specific coactivators CRTC1/TORC1 and CRTC2/TORC2, leading to inhibit CREB activity. Also regulates hepatic lipogenesis by phosphorylating and inhibiting SREBF1. In concert with CRTC1/TORC1, regulates the light-induced entrainment of the circadian clock by attenuating PER1 induction; represses CREB-mediated transcription of PER1 by phosphorylating and deactivating CRTC1/TORC1. The sequence is that of Serine/threonine-protein kinase SIK1 (Sik1) from Rattus norvegicus (Rat).